The chain runs to 179 residues: Hypoxanthine-guanine phosphoribosyltransferase (179 aa).

Lys-42 and Gly-43 together coordinate diphosphate. Residues Glu-98 and Asp-99 each contribute to the Mg(2+) site. Glu-102 (proton acceptor) is an active-site residue. Residues Lys-130, 151 to 152 (FV), and Asp-158 each bind GMP. Residue Arg-164 participates in diphosphate binding.

This sequence belongs to the purine/pyrimidine phosphoribosyltransferase family. Mg(2+) is required as a cofactor.

The protein localises to the cytoplasm. The enzyme catalyses IMP + diphosphate = hypoxanthine + 5-phospho-alpha-D-ribose 1-diphosphate. It carries out the reaction GMP + diphosphate = guanine + 5-phospho-alpha-D-ribose 1-diphosphate. The protein operates within purine metabolism; IMP biosynthesis via salvage pathway; IMP from hypoxanthine: step 1/1. Its pathway is purine metabolism; GMP biosynthesis via salvage pathway; GMP from guanine: step 1/1. In terms of biological role, purine salvage pathway enzyme that catalyzes the transfer of the ribosyl-5-phosphate group from 5-phospho-alpha-D-ribose 1-diphosphate (PRPP) to the N9 position of the 6-oxopurines hypoxanthine and guanine to form the corresponding ribonucleotides IMP (inosine 5'-monophosphate) and GMP (guanosine 5'-monophosphate), with the release of PPi. This chain is Hypoxanthine-guanine phosphoribosyltransferase (hpt), found in Staphylococcus aureus (strain COL).